Consider the following 313-residue polypeptide: Protein-glutamine deamidase Cif (313 aa).

Catalysis depends on residues cysteine 128, histidine 186, and glutamine 205.

The protein belongs to the Cif family.

Its subcellular location is the secreted. The protein localises to the host nucleus. The catalysed reaction is L-glutaminyl-[protein] + H2O = L-glutamyl-[protein] + NH4(+). Its function is as follows. Protein-glutamine deamidase effector that inhibits the host cell cycle and other key cellular processes such as the actin network and programmed-cell death. Acts by mediating the side chain deamidation of 'Gln-40' of host NEDD8, converting it to glutamate, thereby abolishing the activity of cullin-RING-based E3 ubiquitin-protein ligase complexes (CRL complexes). Inactivation of CRL complexes prevents ubiquitination and subsequent degradation of the cyclin-dependent kinase inhibitors CDKN1A/p21 and CDKN1B/p27, leading to G1 and G2 cell cycle arrests in host cells. Deamidation of 'Gln-40' of host NEDD8 also triggers macrophage-specific programmed cell death. Also able to catalyze deamidation of 'Gln-40' of host ubiquitin in vitro; however, NEDD8 constitutes the preferred substrate in vivo. This is Protein-glutamine deamidase Cif from Photorhabdus laumondii subsp. laumondii (strain DSM 15139 / CIP 105565 / TT01) (Photorhabdus luminescens subsp. laumondii).